The primary structure comprises 1455 residues: MSDSWVPNSASGQDPGGRRRAWAELLAGRVKREKYNPERAQKLKESAVRLLRSHQDLNALLLEVEGPLCKKLSLSKVIDCDSSEAYANHSSSFIGSALQDQASRLGVPVGILSAGMVASSVGQICTAPAETSHPVLLTVEQRKKLSSLLEFAQYLLAHSMFSRLSFCQELWKIQSSLLLEAVWHLHVQGIVSLQELLESHPDMHAVGSWLFRNLCCLCEQMEASCQHADVARAMLSDFVQMFVLRGFQKNSDLRRTVEPEKMPQVTVDVLQRMLIFALDALAAGVQEESSTHKIVRCWFGVFSGHTLGSVISTDPLKRFFSHTLTQILTHSPVLKASDAVQMQREWSFARTHPLLTSLYRRLFVMLSAEELVGHLQEVLETQEVHWQRVLSFVSALVVCFPEAQQLLEDWVARLMAQAFESCQLDSMVTAFLVVRQAALEGPSAFLSYADWFKASFGSTRGYHGCSKKALVFLFTFLSELVPFESPRYLQVHILHPPLVPGKYRSLLTDYISLAKTRLADLKVSIENMGLYEDLSSAGDITEPHSQALQDVEKAIMVFEHTGNIPVTVMEASIFRRPYYVSHFLPALLTPRVLPKVPDSRVAFIESLKRADKIPPSLYSTYCQACSAAEEKPEDAALGVRAEPNSAEEPLGQLTAALGELRASMTDPSQRDVISAQVAVISERLRAVLGHNEDDSSVEISKIQLSINTPRLEPREHMAVDLLLTSFCQNLMAASSVAPPERQGPWAALFVRTMCGRVLPAVLTRLCQLLRHQGPSLSAPHVLGLAALAVHLGESRSALPEVDVGPPAPGAGLPVPALFDSLLTCRTRDSLFFCLKFCTAAISYSLCKFSSQSRDTLCSCLSPGLIKKFQFLMFRLFSEARQPLSEEDVASLSWRPLHLPSADWQRAALSLWTHRTFREVLKEEDVHLTYQDWLHLELEIQPEADALSDTERQDFHQWAIHEHFLPESSASGGCDGDLQAACTILVNALMDFHQSSRSYDHSENSDLVFGGRTGNEDIISRLQEMVADLELQQDLIVPLGHTPSQEHFLFEIFRRRLQALTSGWSVAASLQRQRELLMYKRILLRLPSSVLCGSSFQAEQPITARCEQFFHLVNSEMRNFCSHGGALTQDITAHFFRGLLNACLRSRDPSLMVDFILAKCQTKCPLILTSALVWWPSLEPVLLCRWRRHCQSPLPRELQKLQEGRQFASDFLSPEAASPAPNPDWLSAAALHFAIQQVREENIRKQLKKLDCEREELLVFLFFFSLMGLLSSHLTSNSTTDLPKAFHVCAAILECLEKRKISWLALFQLTESDLRLGRLLLRVAPDQHTRLLPFAFYSLLSYFHEDAAIREEAFLHVAVDMYLKLVQLFVAGDTSTVSPPAGRSLELKGQGNPVELITKARLFLLQLIPRCPKKSFSHVAELLADRGDCDPEVSAALQSRQQAAPDADLSQEPHLF.

The short motif at 18–34 is the Nuclear localization signal element; the sequence is RRRAWAELLAGRVKREK. Phosphoserine is present on Ser1449.

In terms of assembly, belongs to the multisubunit FA complex composed of FANCA, FANCB, FANCC, FANCE, FANCF, FANCG, FANCL/PHF9 and FANCM. The complex is not found in FA patients. In complex with FANCF, FANCG and FANCL, but not with FANCC, nor FANCE, interacts with HES1; this interaction may be essential for the stability and nuclear localization of FA core complex proteins. The complex with FANCC and FANCG may also include EIF2AK2 and HSP70. Interacts with FAAP20/C1orf86; interaction is direct. Post-translationally, phosphorylation is required for the formation of the nuclear complex. Not phosphorylated in cells derived from groups A, B, C, E, F, G, and H.

Its subcellular location is the nucleus. It is found in the cytoplasm. Its function is as follows. DNA repair protein that may operate in a postreplication repair or a cell cycle checkpoint function. May be involved in interstrand DNA cross-link repair and in the maintenance of normal chromosome stability. In Homo sapiens (Human), this protein is Fanconi anemia group A protein (FANCA).